A 224-amino-acid polypeptide reads, in one-letter code: Uridylate kinase (224 aa).

Position 8 to 12 (8 to 12 (KITGK)) interacts with ATP. Residue G43 participates in UMP binding. The ATP site is built by G44 and R48. Residues D66 and 114-120 (LIPGQST) contribute to the UMP site. Residues S140, Y146, and D149 each contribute to the ATP site.

Belongs to the UMP kinase family. As to quaternary structure, homohexamer.

It localises to the cytoplasm. The catalysed reaction is UMP + ATP = UDP + ADP. It functions in the pathway pyrimidine metabolism; CTP biosynthesis via de novo pathway; UDP from UMP (UMPK route): step 1/1. Inhibited by UTP. In terms of biological role, catalyzes the reversible phosphorylation of UMP to UDP. This chain is Uridylate kinase, found in Staphylothermus marinus (strain ATCC 43588 / DSM 3639 / JCM 9404 / F1).